Consider the following 116-residue polypeptide: Large ribosomal subunit protein uL18 (116 aa).

It belongs to the universal ribosomal protein uL18 family. In terms of assembly, part of the 50S ribosomal subunit; part of the 5S rRNA/L5/L18/L25 subcomplex. Contacts the 5S and 23S rRNAs.

Its function is as follows. This is one of the proteins that bind and probably mediate the attachment of the 5S RNA into the large ribosomal subunit, where it forms part of the central protuberance. In Azotobacter vinelandii (strain DJ / ATCC BAA-1303), this protein is Large ribosomal subunit protein uL18.